The following is a 314-amino-acid chain: L-lactate dehydrogenase 2 (314 aa).

NAD(+)-binding positions include Val-16, Asp-37, Lys-42, Tyr-68, and 82–83 (GV). Gln-85 and Arg-91 together coordinate substrate. NAD(+) is bound by residues Ser-104, 121 to 123 (ASN), and Thr-146. 123-126 (NPVD) provides a ligand contact to substrate. 151-154 (DTTR) serves as a coordination point for substrate. Beta-D-fructose 1,6-bisphosphate-binding residues include Arg-156 and His-171. The active-site Proton acceptor is the His-178. Phosphotyrosine is present on Tyr-223. Residue Thr-232 coordinates substrate.

Belongs to the LDH/MDH superfamily. LDH family. In terms of assembly, homotetramer.

Its subcellular location is the cytoplasm. It carries out the reaction (S)-lactate + NAD(+) = pyruvate + NADH + H(+). Its pathway is fermentation; pyruvate fermentation to lactate; (S)-lactate from pyruvate: step 1/1. Allosterically activated by fructose 1,6-bisphosphate (FBP). Functionally, catalyzes the conversion of lactate to pyruvate. This chain is L-lactate dehydrogenase 2, found in Lactococcus lactis subsp. lactis (strain IL1403) (Streptococcus lactis).